The primary structure comprises 239 residues: MEHPILFLNLLFEKLGLHVVGPEQAKSFGDFLLQPHVTYTWVVMLVLLGLGSMAAKGLEMVPKGAQNFFEVVITGIEDFMISITGEEGRFVFPLIASLGMFILFSNYLGMIPGFFSPTANINTTAACALISVVFTHVIGIKFHGVKYIKHFMGPVWWLTPLIMPIEIIGHIARVLSLSIRLFGNVFGEELVLGILFFLAGFYLAPLPMMFLGLFTGFIQAFIFCLLSMMYFAGAIEHAH.

6 helical membrane-spanning segments follow: residues 31 to 51 (FLLQPHVTYTWVVMLVLLGLG), 91 to 111 (VFPLIASLGMFILFSNYLGMI), 125 to 145 (AACALISVVFTHVIGIKFHGV), 151 to 171 (FMGPVWWLTPLIMPIEIIGHI), 194 to 214 (ILFFLAGFYLAPLPMMFLGLF), and 215 to 235 (TGFIQAFIFCLLSMMYFAGAI).

Belongs to the ATPase A chain family. In terms of assembly, F-type ATPases have 2 components, CF(1) - the catalytic core - and CF(0) - the membrane proton channel. CF(1) has five subunits: alpha(3), beta(3), gamma(1), delta(1), epsilon(1). CF(0) has three main subunits: a(1), b(2) and c(9-12). The alpha and beta chains form an alternating ring which encloses part of the gamma chain. CF(1) is attached to CF(0) by a central stalk formed by the gamma and epsilon chains, while a peripheral stalk is formed by the delta and b chains.

The protein localises to the cell inner membrane. In terms of biological role, key component of the proton channel; it plays a direct role in the translocation of protons across the membrane. This Syntrophobacter fumaroxidans (strain DSM 10017 / MPOB) protein is ATP synthase subunit a.